A 206-amino-acid chain; its full sequence is GTP cyclohydrolase 1 (206 aa).

A compositionally biased stretch (basic and acidic residues) spans 1–17 (MDAVTPKKDIPRPDSVR). A disordered region spans residues 1–23 (MDAVTPKKDIPRPDSVRRPSQQE). Positions 95, 98, and 166 each coordinate Zn(2+).

Belongs to the GTP cyclohydrolase I family. As to quaternary structure, toroid-shaped homodecamer, composed of two pentamers of five dimers.

The catalysed reaction is GTP + H2O = 7,8-dihydroneopterin 3'-triphosphate + formate + H(+). Its pathway is cofactor biosynthesis; 7,8-dihydroneopterin triphosphate biosynthesis; 7,8-dihydroneopterin triphosphate from GTP: step 1/1. In Hyphomonas neptunium (strain ATCC 15444), this protein is GTP cyclohydrolase 1.